Reading from the N-terminus, the 221-residue chain is Translation initiation factor 6 (221 aa).

Belongs to the eIF-6 family.

Functionally, binds to the 50S ribosomal subunit and prevents its association with the 30S ribosomal subunit to form the 70S initiation complex. The polypeptide is Translation initiation factor 6 (Cenarchaeum symbiosum (strain A)).